The primary structure comprises 83 residues: Cytochrome b559 subunit alpha (83 aa).

Residues 21-35 (VIHSITIPSLFIAGW) traverse the membrane as a helical segment. Heme is bound at residue His23.

The protein belongs to the PsbE/PsbF family. Heterodimer of an alpha subunit and a beta subunit. PSII is composed of 1 copy each of membrane proteins PsbA, PsbB, PsbC, PsbD, PsbE, PsbF, PsbH, PsbI, PsbJ, PsbK, PsbL, PsbM, PsbT, PsbX, PsbY, PsbZ, Psb30/Ycf12, at least 3 peripheral proteins of the oxygen-evolving complex and a large number of cofactors. It forms dimeric complexes. Requires heme b as cofactor.

The protein resides in the plastid. It is found in the chloroplast thylakoid membrane. This b-type cytochrome is tightly associated with the reaction center of photosystem II (PSII). PSII is a light-driven water:plastoquinone oxidoreductase that uses light energy to abstract electrons from H(2)O, generating O(2) and a proton gradient subsequently used for ATP formation. It consists of a core antenna complex that captures photons, and an electron transfer chain that converts photonic excitation into a charge separation. In Chaetosphaeridium globosum (Charophycean green alga), this protein is Cytochrome b559 subunit alpha.